A 274-amino-acid polypeptide reads, in one-letter code: 23S rRNA (adenosine(1067)-2'-O)-methyltransferase (274 aa).

S-adenosyl-L-methionine contacts are provided by residues R165, L195, 218–220, 238–240, and 247–252; these read GSE, IPM, and LNVSVS.

This sequence belongs to the class IV-like SAM-binding methyltransferase superfamily. RNA methyltransferase TsnR/AvirB family. Homodimer.

The enzyme catalyses adenosine(1067) in 23S rRNA + S-adenosyl-L-methionine = 2'-O-methyladenosine(1067) in 23S rRNA + S-adenosyl-L-homocysteine + H(+). Functionally, specifically methylates the adenosine-1067 in 23S ribosomal RNA. Confers resistance to antibiotic nosiheptide. The chain is 23S rRNA (adenosine(1067)-2'-O)-methyltransferase from Streptomyces actuosus.